Consider the following 89-residue polypeptide: Large ribosomal subunit protein bL31B (89 aa).

It belongs to the bacterial ribosomal protein bL31 family. Type B subfamily. Part of the 50S ribosomal subunit.

The protein is Large ribosomal subunit protein bL31B of Corynebacterium urealyticum (strain ATCC 43042 / DSM 7109).